Reading from the N-terminus, the 154-residue chain is Ribonuclease H (154 aa).

One can recognise an RNase H type-1 domain in the interval 3–144 (ELPVVTIYTD…ADQLARDGIV (142 aa)). The Mg(2+) site is built by Asp-12, Glu-50, Asp-72, and Asp-136.

Belongs to the RNase H family. As to quaternary structure, monomer. It depends on Mg(2+) as a cofactor.

Its subcellular location is the cytoplasm. It carries out the reaction Endonucleolytic cleavage to 5'-phosphomonoester.. Functionally, endonuclease that specifically degrades the RNA of RNA-DNA hybrids. This Bradyrhizobium diazoefficiens (strain JCM 10833 / BCRC 13528 / IAM 13628 / NBRC 14792 / USDA 110) protein is Ribonuclease H.